The primary structure comprises 286 residues: MGNLFCCVQVDQSTVAIKETFGKFEDVLEPGCHFLPWCLGSQVAGYLSLRVQQLDVRCETKTKDNVFVNVVASIQYRALANKANDAYYKLSNTRGQIQAYVFDVIRASVPKLLLDDVFEQKNDIAKAVEEELEKAMSAYGYEIVQTLIVDIEPDEHVKRAMNEINAAARMRLAANEKAEAEKILQIKRAEGEAESKYLSGLGIARQRQAIVDGLRDSVLGFAVNVPGTTAKDVMDMVLVTQYFDTMKEIGASSKSSAVFIPHGPGAVRDVASQIRDGLLQGSSANL.

A lipid anchor (N-myristoyl glycine) is attached at G2. The stretch at 114–190 (LDDVFEQKND…EKILQIKRAE (77 aa)) forms a coiled coil.

As to quaternary structure, self-interacts and forms heteromers. Interacts with NB-LRR class of R proteins before R proteins (e.g. RPS2 or RPM1) are activated by the effectors. Interacts with LRR1.

The protein localises to the cell membrane. Functionally, positive regulator of hypersensitive response (HR)-like cell death. May be involved in potassium ion channel regulation. In Arabidopsis thaliana (Mouse-ear cress), this protein is Hypersensitive-induced response protein 1.